The chain runs to 113 residues: U11-theraphotoxin-Hhn1a (113 aa).

An N-terminal signal peptide occupies residues 1 to 21; it reads MNTVRVTFLLVFVLAVSLGRA. Positions 22–74 are excised as a propeptide; it reads DKDENRMEMQEKTEQGKSYLDFAENLLLQKLEELEAKLLEEDSEESRNSRQKR. Cystine bridges form between C75–C90, C82–C95, and C89–C110.

This sequence belongs to the neurotoxin 14 (magi-1) family. 01 (HNTX-16) subfamily. Expressed by the venom gland.

It localises to the secreted. Its function is as follows. Probable ion channel inhibitor. This is U11-theraphotoxin-Hhn1a from Cyriopagopus hainanus (Chinese bird spider).